The chain runs to 278 residues: Diaminopimelate epimerase (278 aa).

Positions 13, 49, and 68 each coordinate substrate. Residue Cys77 is the Proton donor of the active site. Residues 78 to 79 (GN), Asn161, Asn194, and 212 to 213 (ER) contribute to the substrate site. The active-site Proton acceptor is Cys221. Substrate is bound at residue 222-223 (GT).

It belongs to the diaminopimelate epimerase family. In terms of assembly, homodimer.

The protein resides in the cytoplasm. The catalysed reaction is (2S,6S)-2,6-diaminopimelate = meso-2,6-diaminopimelate. It participates in amino-acid biosynthesis; L-lysine biosynthesis via DAP pathway; DL-2,6-diaminopimelate from LL-2,6-diaminopimelate: step 1/1. Catalyzes the stereoinversion of LL-2,6-diaminopimelate (L,L-DAP) to meso-diaminopimelate (meso-DAP), a precursor of L-lysine and an essential component of the bacterial peptidoglycan. This is Diaminopimelate epimerase from Nitrosomonas eutropha (strain DSM 101675 / C91 / Nm57).